A 374-amino-acid chain; its full sequence is UPF0754 membrane protein SAS1767 (374 aa).

Transmembrane regions (helical) follow at residues 4 to 24 (LFII…TNVI) and 354 to 374 (SLGF…AIFV).

This sequence belongs to the UPF0754 family.

The protein localises to the cell membrane. The sequence is that of UPF0754 membrane protein SAS1767 from Staphylococcus aureus (strain MSSA476).